The sequence spans 102 residues: Thioredoxin (102 aa).

The 102-residue stretch at 1–102 (MVKVVSAENF…SLIRLINQHS (102 aa)) folds into the Thioredoxin domain. Cys28 and Cys31 are disulfide-bonded.

This sequence belongs to the thioredoxin family.

In terms of biological role, participates in various redox reactions through the reversible oxidation of its active center dithiol to a disulfide and catalyzes dithiol-disulfide exchange reactions. The protein is Thioredoxin (trxA) of Chlamydia caviae (strain ATCC VR-813 / DSM 19441 / 03DC25 / GPIC) (Chlamydophila caviae).